Reading from the N-terminus, the 1003-residue chain is Phosphatidylinositol 4,5-bisphosphate 5-phosphatase A (1003 aa).

2 disordered regions span residues 1 to 110 and 147 to 414; these read MEGQ…AAKS and AMPR…QPTC. Positions 6-11 match the RSXSXX motif 1 motif; the sequence is RSGSAR. The span at 11 to 24 shows a compositional bias: low complexity; that stretch reads RPGTRTGLGPLPGT. Arg56 is subject to Asymmetric dimethylarginine; alternate. Residue Arg56 is modified to Omega-N-methylarginine; alternate. Arg65 carries the omega-N-methylarginine modification. Residue Arg76 is modified to Asymmetric dimethylarginine. Arg83 is modified (asymmetric dimethylarginine; alternate). The residue at position 83 (Arg83) is an Omega-N-methylarginine; alternate. Residues 160–174 are compositionally biased toward polar residues; the sequence is LTPTSRDQKQLSPTS. Position 171 is a phosphoserine (Ser171). Positions 180-196 are enriched in low complexity; it reads ALATSGLSLALASQEQP. A compositionally biased stretch (pro residues) spans 197–210; sequence PQSPSSPSPVPSPV. Residues 284–294 show a composition bias toward basic and acidic residues; it reads ARPEAPRHSPE. Phosphoserine is present on residues Ser292 and Ser325. Positions 338 to 348 are enriched in pro residues; it reads VPPPLPKPPRS. An SH3-binding motif is present at residues 346-351; that stretch reads PRSPSR. Low complexity-rich tracts occupy residues 349–361 and 390–413; these read PSRS…NRSP and QAQE…AQPT. Positions 351–356 match the RSXSXX motif 2 motif; it reads RSPSRS. The interval 422–725 is catalytic; that stretch reads ITVVTWNVGT…SDHKPVAAQF (304 aa). The tract at residues 726-837 is required for ruffle localization; the sequence is ILQFAFRDDV…IGVTEPFQIS (112 aa). Residues 839–1003 form a disordered region; the sequence is PTSESASSST…LGLEEGGLGP (165 aa). A compositionally biased stretch (low complexity) spans 840–855; it reads TSESASSSTDSSGTSS. 2 short sequence motifs (RSXSXX motif) span residues 871–876 and 882–887; these read RSPSPG and RSRSPG. Residue Ser900 is modified to Phosphoserine. Low complexity-rich tracts occupy residues 907–919 and 927–943; these read SRSP…QLPR and SSSS…GLPG. The RSXSXX motif 5 motif lies at 908-913; that stretch reads RSPSPQ. At Ser987 the chain carries Phosphoserine.

The protein belongs to the inositol 1,4,5-trisphosphate 5-phosphatase type II family.

The protein localises to the cytoplasm. The enzyme catalyses 1D-myo-inositol 1,4,5-trisphosphate + H2O = 1D-myo-inositol 1,4-bisphosphate + phosphate. The catalysed reaction is 1D-myo-inositol 1,3,4,5-tetrakisphosphate + H2O = 1D-myo-inositol 1,3,4-trisphosphate + phosphate. It carries out the reaction a 1,2-diacyl-sn-glycero-3-phospho-(1D-myo-inositol-4,5-bisphosphate) + H2O = a 1,2-diacyl-sn-glycero-3-phospho-(1D-myo-inositol 4-phosphate) + phosphate. In terms of biological role, inositol 5-phosphatase, which converts inositol 1,4,5-trisphosphate to inositol 1,4-bisphosphate. Also converts phosphatidylinositol 4,5-bisphosphate to phosphatidylinositol 4-phosphate and inositol 1,3,4,5-tetrakisphosphate to inositol 1,3,4-trisphosphate in vitro. May be involved in modulation of the function of inositol and phosphatidylinositol polyphosphate-binding proteins that are present at membranes ruffles. This Mus musculus (Mouse) protein is Phosphatidylinositol 4,5-bisphosphate 5-phosphatase A (Inpp5j).